The chain runs to 241 residues: Parkin coregulated gene protein homolog (241 aa).

Microtubule inner protein component of sperm flagellar doublet microtubules. Forms a large molecular chaperone complex containing heat shock proteins 70 and 90 and chaperonin components. Interacts with STIP1, PRKN, GPR37, HSPA8, TCP1/CCT1, CCT2, CCT3, CCT4, CCT5, CCT6A, CCT7 and CCT8. Interacts with MEIG1.

It is found in the cytoplasm. Its subcellular location is the cytoskeleton. The protein resides in the cilium axoneme. The protein localises to the flagellum axoneme. In terms of biological role, microtubule inner protein (MIP) part of the dynein-decorated doublet microtubules (DMTs) in cilia axoneme, which is required for motile cilia beating. Suppresses cell death induced by accumulation of unfolded Pael receptor (Pael-R, a substrate of Parkin). Facilitates the formation of inclusions consisting of Pael-R, molecular chaperones, protein degradation molecules and itself when proteasome is inhibited. May play an important role in the formation of Lewy bodies and protection of dopaminergic neurons against Parkinson disease. This is Parkin coregulated gene protein homolog (Pacrg) from Mus musculus (Mouse).